Consider the following 248-residue polypeptide: Sugar fermentation stimulation protein homolog (248 aa).

It belongs to the SfsA family.

This chain is Sugar fermentation stimulation protein homolog, found in Methylorubrum extorquens (strain CM4 / NCIMB 13688) (Methylobacterium extorquens).